The sequence spans 416 residues: Creatine kinase U-type, mitochondrial (416 aa).

Residues 1–39 (MAGPFSRLLSARPGLRLLALAGAGSLAAGFLLRSEPVRA) constitute a mitochondrion transit peptide. Residues 40–64 (ASERRRLYPPSAEYPDLRKHNNCMA) are cardiolipin-binding. The Phosphagen kinase N-terminal domain maps to 45–131 (RLYPPSAEYP…FDPVIQERHN (87 aa)). Serine 151 bears the Phosphoserine mark. The Phosphagen kinase C-terminal domain maps to 158–400 (YVLSSRVRTG…NFLIDCERRL (243 aa)). 161-165 (SSRVR) is an ATP binding site. Residue serine 196 is modified to Phosphoserine. Residue threonine 213 is modified to Phosphothreonine. Residue histidine 224 coordinates ATP. Serine 232 bears the Phosphoserine mark. ATP-binding positions include arginine 269, arginine 325, and 353–358 (RGTGGV). Threonine 355 is subject to Phosphothreonine. A Phosphoserine modification is found at serine 365. Aspartate 368 lines the ATP pocket.

Belongs to the ATP:guanido phosphotransferase family. In terms of assembly, exists as an octamer composed of four MTCK homodimers.

The protein resides in the mitochondrion inner membrane. The enzyme catalyses creatine + ATP = N-phosphocreatine + ADP + H(+). Functionally, reversibly catalyzes the transfer of phosphate between ATP and various phosphogens (e.g. creatine phosphate). Creatine kinase isoenzymes play a central role in energy transduction in tissues with large, fluctuating energy demands, such as skeletal muscle, heart, brain and spermatozoa. This chain is Creatine kinase U-type, mitochondrial (CKMT1), found in Bos taurus (Bovine).